The sequence spans 455 residues: Probable Xaa-Pro aminopeptidase GSTUM_00008071001 (455 aa).

Residues aspartate 251, aspartate 262, glutamate 386, and glutamate 426 each contribute to the Mn(2+) site.

The protein belongs to the peptidase M24B family. Requires Mn(2+) as cofactor.

The enzyme catalyses Release of any N-terminal amino acid, including proline, that is linked to proline, even from a dipeptide or tripeptide.. Catalyzes the removal of a penultimate prolyl residue from the N-termini of peptides. The sequence is that of Probable Xaa-Pro aminopeptidase GSTUM_00008071001 from Tuber melanosporum (strain Mel28) (Perigord black truffle).